The following is a 380-amino-acid chain: Bifunctional enzyme IspD/IspF (380 aa).

Residues 1–224 (MTIPATYAAI…ERILGDAMDI (224 aa)) form a 2-C-methyl-D-erythritol 4-phosphate cytidylyltransferase region. The interval 225–380 (RLGNGFDVHA…SIATATLVKG (156 aa)) is 2-C-methyl-D-erythritol 2,4-cyclodiphosphate synthase. A divalent metal cation is bound by residues aspartate 231 and histidine 233. Residues 231 to 233 (DVH) and 257 to 258 (HS) each bind 4-CDP-2-C-methyl-D-erythritol 2-phosphate. Histidine 265 contributes to the a divalent metal cation binding site. 4-CDP-2-C-methyl-D-erythritol 2-phosphate-binding positions include 279-281 (DIG), 355-358 (TTSE), phenylalanine 362, and arginine 365.

It in the N-terminal section; belongs to the IspD/TarI cytidylyltransferase family. IspD subfamily. This sequence in the C-terminal section; belongs to the IspF family. A divalent metal cation is required as a cofactor.

It catalyses the reaction 2-C-methyl-D-erythritol 4-phosphate + CTP + H(+) = 4-CDP-2-C-methyl-D-erythritol + diphosphate. The enzyme catalyses 4-CDP-2-C-methyl-D-erythritol 2-phosphate = 2-C-methyl-D-erythritol 2,4-cyclic diphosphate + CMP. It participates in isoprenoid biosynthesis; isopentenyl diphosphate biosynthesis via DXP pathway; isopentenyl diphosphate from 1-deoxy-D-xylulose 5-phosphate: step 2/6. The protein operates within isoprenoid biosynthesis; isopentenyl diphosphate biosynthesis via DXP pathway; isopentenyl diphosphate from 1-deoxy-D-xylulose 5-phosphate: step 4/6. Bifunctional enzyme that catalyzes the formation of 4-diphosphocytidyl-2-C-methyl-D-erythritol from CTP and 2-C-methyl-D-erythritol 4-phosphate (MEP) (IspD), and catalyzes the conversion of 4-diphosphocytidyl-2-C-methyl-D-erythritol 2-phosphate (CDP-ME2P) to 2-C-methyl-D-erythritol 2,4-cyclodiphosphate (ME-CPP) with a corresponding release of cytidine 5-monophosphate (CMP) (IspF). This is Bifunctional enzyme IspD/IspF from Paracoccus denitrificans (strain Pd 1222).